The following is a 282-amino-acid chain: Anamorsin homolog (282 aa).

The interval 5–151 (VDTNNFVLLL…EVGAKTALSL (147 aa)) is N-terminal SAM-like domain. The segment at 152-196 (SFAPKPAQPKAETSAAQIWTLSAQDIDDEDVDLLDSDTLLDEDDL) is linker. [2Fe-2S] cluster contacts are provided by C208, C218, C221, and C223. The segment at 208–223 (CGPGSGKKKACKNCTC) is fe-S binding site A. [4Fe-4S] cluster contacts are provided by C243, C246, C254, and C257. 2 short sequence motifs (cx2C motif) span residues 243–246 (CGSC) and 254–257 (CSTC). The segment at 243–257 (CGSCYLGDAFRCSTC) is fe-S binding site B.

It belongs to the anamorsin family. In terms of assembly, monomer. Requires [2Fe-2S] cluster as cofactor. [4Fe-4S] cluster is required as a cofactor.

The protein resides in the cytoplasm. It is found in the mitochondrion intermembrane space. In terms of biological role, component of the cytosolic iron-sulfur (Fe-S) protein assembly (CIA) machinery. Required for the maturation of extramitochondrial Fe-S proteins. Part of an electron transfer chain functioning in an early step of cytosolic Fe-S biogenesis, facilitating the de novo assembly of a [4Fe-4S] cluster on the cytosolic Fe-S scaffold complex. Electrons are transferred from NADPH via a FAD- and FMN-containing diflavin oxidoreductase. Together with the diflavin oxidoreductase, also required for the assembly of the diferric tyrosyl radical cofactor of ribonucleotide reductase (RNR), probably by providing electrons for reduction during radical cofactor maturation in the catalytic small subunit. The polypeptide is Anamorsin homolog (Nematostella vectensis (Starlet sea anemone)).